Here is a 111-residue protein sequence, read N- to C-terminus: Cytochrome c-550 (111 aa).

Cys-13, Cys-16, His-17, and Met-90 together coordinate heme c.

Binds 1 heme c group covalently per subunit.

The sequence is that of Cytochrome c-550 from Novispirillum itersonii (Aquaspirillum itersonii).